Reading from the N-terminus, the 129-residue chain is Histone H2A-III (129 aa).

It belongs to the histone H2A family. The nucleosome is a histone octamer containing two molecules each of H2A, H2B, H3 and H4 assembled in one H3-H4 heterotetramer and two H2A-H2B heterodimers. The octamer wraps approximately 147 bp of DNA.

The protein localises to the nucleus. It localises to the chromosome. Its function is as follows. Core component of nucleosome. Nucleosomes wrap and compact DNA into chromatin, limiting DNA accessibility to the cellular machineries which require DNA as a template. Histones thereby play a central role in transcription regulation, DNA repair, DNA replication and chromosomal stability. DNA accessibility is regulated via a complex set of post-translational modifications of histones, also called histone code, and nucleosome remodeling. The polypeptide is Histone H2A-III (Volvox carteri (Green alga)).